A 490-amino-acid polypeptide reads, in one-letter code: Glutamate--tRNA ligase (490 aa).

The short motif at 10–20 (PSPTGSLHIGG) is the 'HIGH' region element. Positions 251–255 (KLSKR) match the 'KMSKS' region motif. Lys-254 provides a ligand contact to ATP.

Belongs to the class-I aminoacyl-tRNA synthetase family. Glutamate--tRNA ligase type 1 subfamily. As to quaternary structure, monomer.

It is found in the cytoplasm. It catalyses the reaction tRNA(Glu) + L-glutamate + ATP = L-glutamyl-tRNA(Glu) + AMP + diphosphate. Functionally, catalyzes the attachment of glutamate to tRNA(Glu) in a two-step reaction: glutamate is first activated by ATP to form Glu-AMP and then transferred to the acceptor end of tRNA(Glu). The polypeptide is Glutamate--tRNA ligase (Moorella thermoacetica (strain ATCC 39073 / JCM 9320)).